The sequence spans 320 residues: Ferrochelatase (320 aa).

Fe cation contacts are provided by histidine 194 and glutamate 275.

Belongs to the ferrochelatase family. Monomer.

Its subcellular location is the cytoplasm. It catalyses the reaction heme b + 2 H(+) = protoporphyrin IX + Fe(2+). The protein operates within porphyrin-containing compound metabolism; protoheme biosynthesis; protoheme from protoporphyrin-IX: step 1/1. In terms of biological role, catalyzes the ferrous insertion into protoporphyrin IX. The polypeptide is Ferrochelatase (Escherichia coli (strain K12 / MC4100 / BW2952)).